Here is a 154-residue protein sequence, read N- to C-terminus: 6,7-dimethyl-8-ribityllumazine synthase (154 aa).

5-amino-6-(D-ribitylamino)uracil-binding positions include phenylalanine 26, alanine 60–glutamate 62, and cysteine 84–isoleucine 86. Glutamate 89–threonine 90 is a binding site for (2S)-2-hydroxy-3-oxobutyl phosphate. Catalysis depends on histidine 92, which acts as the Proton donor. Asparagine 117 provides a ligand contact to 5-amino-6-(D-ribitylamino)uracil. Arginine 131 contributes to the (2S)-2-hydroxy-3-oxobutyl phosphate binding site.

It belongs to the DMRL synthase family.

The catalysed reaction is (2S)-2-hydroxy-3-oxobutyl phosphate + 5-amino-6-(D-ribitylamino)uracil = 6,7-dimethyl-8-(1-D-ribityl)lumazine + phosphate + 2 H2O + H(+). It functions in the pathway cofactor biosynthesis; riboflavin biosynthesis; riboflavin from 2-hydroxy-3-oxobutyl phosphate and 5-amino-6-(D-ribitylamino)uracil: step 1/2. Functionally, catalyzes the formation of 6,7-dimethyl-8-ribityllumazine by condensation of 5-amino-6-(D-ribitylamino)uracil with 3,4-dihydroxy-2-butanone 4-phosphate. This is the penultimate step in the biosynthesis of riboflavin. The protein is 6,7-dimethyl-8-ribityllumazine synthase of Leptothrix cholodnii (strain ATCC 51168 / LMG 8142 / SP-6) (Leptothrix discophora (strain SP-6)).